Consider the following 64-residue polypeptide: Large ribosomal subunit protein uL29 (64 aa).

It belongs to the universal ribosomal protein uL29 family.

This chain is Large ribosomal subunit protein uL29, found in Nitratiruptor sp. (strain SB155-2).